The chain runs to 373 residues: MKSGRFIGVMSGTSLDGVDVVLAAIDETMVAQQASLTWPIPVHLKKGILDICQGQPLTLSQLGQLDTQLGRLFAQAVNALLAQQRLQPRDIVAIGCHGQTVWHEPTGEAPHTLQIGDNNHIVAHTGITVVGDFRRRDIALGGQGAPLVPAFHHALLGHPTEKRMVLNIGGIANLSLLFPGQAVRGYDTGPGNMLMDAWIWRQCAQPYDKDAAWAKEGQVILPLLQKMLRDPYFAASAPKSTGREYFNYGWLERHLAAFPGADARDVQATLAELTAVSIAQQVLLNGGCERLMVCGGGGRNPLVMARLAALLTGIEVSTTDKAGISGDDMEALAFAWLAWRTLAGLPGNLPSVTGATEASVLGAIYPANPITQS.

An ATP-binding site is contributed by 12–19 (GTSLDGVD).

Belongs to the anhydro-N-acetylmuramic acid kinase family.

The enzyme catalyses 1,6-anhydro-N-acetyl-beta-muramate + ATP + H2O = N-acetyl-D-muramate 6-phosphate + ADP + H(+). Its pathway is amino-sugar metabolism; 1,6-anhydro-N-acetylmuramate degradation. It functions in the pathway cell wall biogenesis; peptidoglycan recycling. Functionally, catalyzes the specific phosphorylation of 1,6-anhydro-N-acetylmuramic acid (anhMurNAc) with the simultaneous cleavage of the 1,6-anhydro ring, generating MurNAc-6-P. Is required for the utilization of anhMurNAc either imported from the medium or derived from its own cell wall murein, and thus plays a role in cell wall recycling. The protein is Anhydro-N-acetylmuramic acid kinase of Salmonella paratyphi A (strain ATCC 9150 / SARB42).